The sequence spans 145 residues: Small ribosomal subunit protein uS12 (145 aa).

A Hydroxyproline modification is found at proline 64.

Belongs to the universal ribosomal protein uS12 family.

This chain is Small ribosomal subunit protein uS12 (rps23), found in Aspergillus fumigatus (strain ATCC MYA-4609 / CBS 101355 / FGSC A1100 / Af293) (Neosartorya fumigata).